A 400-amino-acid polypeptide reads, in one-letter code: Tryptophan synthase beta chain (400 aa).

Lys92 is subject to N6-(pyridoxal phosphate)lysine.

It belongs to the TrpB family. Tetramer of two alpha and two beta chains. Pyridoxal 5'-phosphate serves as cofactor.

It catalyses the reaction (1S,2R)-1-C-(indol-3-yl)glycerol 3-phosphate + L-serine = D-glyceraldehyde 3-phosphate + L-tryptophan + H2O. It functions in the pathway amino-acid biosynthesis; L-tryptophan biosynthesis; L-tryptophan from chorismate: step 5/5. Its function is as follows. The beta subunit is responsible for the synthesis of L-tryptophan from indole and L-serine. The polypeptide is Tryptophan synthase beta chain (Neisseria gonorrhoeae).